The following is a 178-amino-acid chain: Large ribosomal subunit protein uL10 (178 aa).

The protein belongs to the universal ribosomal protein uL10 family. In terms of assembly, part of the ribosomal stalk of the 50S ribosomal subunit. The N-terminus interacts with L11 and the large rRNA to form the base of the stalk. The C-terminus forms an elongated spine to which L12 dimers bind in a sequential fashion forming a multimeric L10(L12)X complex.

In terms of biological role, forms part of the ribosomal stalk, playing a central role in the interaction of the ribosome with GTP-bound translation factors. In Petrotoga mobilis (strain DSM 10674 / SJ95), this protein is Large ribosomal subunit protein uL10.